We begin with the raw amino-acid sequence, 275 residues long: MQVFETIGAFRAALTAYPTLGFVPTMGFLHEGHLGLVRRAKAENGAVAVSIFVNPTQFGPNEDYASYPRDPDRDLALLKEAGADLVFLPTPDVLYPPGAVTRIEVGGVANELEGQSRPGHFSGVATVVTKLFNIVQPQRAYFGQKDAQQCAVVRRFVADLDIPVEIVVCDIAREADGLARSSRNVRLTAENRQKAPALFQALQETAGLFRNGERDVDILENAMRAVLTEAGLLDIDYATVVNADTFRREQPCSDNALALLAVQAGEVRLIDNMPL.

26 to 33 (MGFLHEGH) lines the ATP pocket. The active-site Proton donor is His-33. Gln-57 is a (R)-pantoate binding site. Gln-57 contributes to the beta-alanine binding site. Position 143–146 (143–146 (GQKD)) interacts with ATP. A (R)-pantoate-binding site is contributed by Gln-149. Residues Ala-172 and 180–183 (RSSR) each bind ATP.

Belongs to the pantothenate synthetase family. In terms of assembly, homodimer.

The protein resides in the cytoplasm. It carries out the reaction (R)-pantoate + beta-alanine + ATP = (R)-pantothenate + AMP + diphosphate + H(+). It participates in cofactor biosynthesis; (R)-pantothenate biosynthesis; (R)-pantothenate from (R)-pantoate and beta-alanine: step 1/1. Functionally, catalyzes the condensation of pantoate with beta-alanine in an ATP-dependent reaction via a pantoyl-adenylate intermediate. This is Pantothenate synthetase from Gluconobacter oxydans (strain 621H) (Gluconobacter suboxydans).